Here is a 1008-residue protein sequence, read N- to C-terminus: G protein-regulated inducer of neurite outgrowth 1 (1008 aa).

The disordered stretch occupies residues 1–859 (MDTAEDPAWL…SPPSRRDAGL (859 aa)). Phosphothreonine is present on Thr-60. Phosphoserine is present on residues Ser-64 and Ser-75. Residues 117–127 (ISGTPEATTSG) show a composition bias toward polar residues. Basic and acidic residues-rich tracts occupy residues 137 to 159 (TEPK…KSSK), 167 to 178 (GKEDPGSSRKAD), 230 to 269 (PRKE…HPVS), and 279 to 291 (EKVD…KRDP). Ser-237 carries the phosphoserine modification. Polar residues-rich tracts occupy residues 326–336 (SGKNGPVSSGT) and 391–406 (HTDT…TSLK). Phosphoserine occurs at positions 436 and 452. Basic and acidic residues predominate over residues 454-466 (GKEDPVSSRREDP). Positions 481-491 (PESSGKTNPVS) are enriched in polar residues. A compositionally biased stretch (basic and acidic residues) spans 549-559 (GKEDPVSKGKA). Ser-615 bears the Phosphoserine mark. Residues 643-656 (PGQEGAAAPGEAGA) are compositionally biased toward low complexity. A compositionally biased stretch (basic and acidic residues) spans 659-679 (LKKETPQASEKVDPGSCRKAE). The residue at position 737 (Ser-737) is a Phosphoserine. The span at 742 to 752 (RGSEGRVEPKA) shows a compositional bias: basic and acidic residues. Positions 755–764 (VSSTEASSLG) are enriched in polar residues. Phosphoserine is present on Ser-799. Low complexity predominate over residues 838-847 (SAFSFQAAPR). Thr-877 is modified (phosphothreonine). Ser-895 and Ser-914 each carry phosphoserine. The interval 899–1008 (AAVAPPEPAE…CCSRAGPTAE (110 aa)) is interaction with GNAO1. The tract at residues 943-986 (ERQIEEHGRQGAPAPPPAARAGPGRSGSVRTAPPDGAAKRPPGL) is disordered. Ser-993 carries the post-translational modification Phosphoserine. Residues Cys-999 and Cys-1000 are each lipidated (S-palmitoyl cysteine).

Interacts with activated forms of GNAI1, GNAO1 and GNAZ. In terms of processing, palmitoylation on Cys-999 and/or Cys-1000 is required for membrane targeting. In terms of tissue distribution, widely expressed in the central nervous system, with highest levels in spinal cord.

It is found in the cell membrane. The protein localises to the cell projection. Its subcellular location is the growth cone. May be involved in neurite outgrowth. In Homo sapiens (Human), this protein is G protein-regulated inducer of neurite outgrowth 1 (GPRIN1).